Consider the following 160-residue polypeptide: Small ribosomal subunit protein uS7 (160 aa).

It belongs to the universal ribosomal protein uS7 family. As to quaternary structure, part of the 30S ribosomal subunit. Contacts proteins S9 and S11.

Functionally, one of the primary rRNA binding proteins, it binds directly to 16S rRNA where it nucleates assembly of the head domain of the 30S subunit. Is located at the subunit interface close to the decoding center, probably blocks exit of the E-site tRNA. This chain is Small ribosomal subunit protein uS7, found in Anaplasma marginale (strain Florida).